Here is a 434-residue protein sequence, read N- to C-terminus: Bifunctional protein GlmU (434 aa).

The segment at M1–K226 is pyrophosphorylase. UDP-N-acetyl-alpha-D-glucosamine is bound by residues L11–G14, K25, Q77, and G84–T85. D105 lines the Mg(2+) pocket. The UDP-N-acetyl-alpha-D-glucosamine site is built by G138, E152, N167, and N224. Residue N224 coordinates Mg(2+). Positions K227 to S247 are linker. The segment at G248–K434 is N-acetyltransferase. UDP-N-acetyl-alpha-D-glucosamine is bound by residues R311 and K328. H339 acts as the Proton acceptor in catalysis. Y342 and N353 together coordinate UDP-N-acetyl-alpha-D-glucosamine. Acetyl-CoA contacts are provided by residues A356, N362–Y363, S381, and A399.

In the N-terminal section; belongs to the N-acetylglucosamine-1-phosphate uridyltransferase family. This sequence in the C-terminal section; belongs to the transferase hexapeptide repeat family. Homotrimer. Mg(2+) is required as a cofactor.

The protein localises to the cytoplasm. The enzyme catalyses alpha-D-glucosamine 1-phosphate + acetyl-CoA = N-acetyl-alpha-D-glucosamine 1-phosphate + CoA + H(+). It catalyses the reaction N-acetyl-alpha-D-glucosamine 1-phosphate + UTP + H(+) = UDP-N-acetyl-alpha-D-glucosamine + diphosphate. It participates in nucleotide-sugar biosynthesis; UDP-N-acetyl-alpha-D-glucosamine biosynthesis; N-acetyl-alpha-D-glucosamine 1-phosphate from alpha-D-glucosamine 6-phosphate (route II): step 2/2. The protein operates within nucleotide-sugar biosynthesis; UDP-N-acetyl-alpha-D-glucosamine biosynthesis; UDP-N-acetyl-alpha-D-glucosamine from N-acetyl-alpha-D-glucosamine 1-phosphate: step 1/1. Its pathway is bacterial outer membrane biogenesis; LPS lipid A biosynthesis. In terms of biological role, catalyzes the last two sequential reactions in the de novo biosynthetic pathway for UDP-N-acetylglucosamine (UDP-GlcNAc). The C-terminal domain catalyzes the transfer of acetyl group from acetyl coenzyme A to glucosamine-1-phosphate (GlcN-1-P) to produce N-acetylglucosamine-1-phosphate (GlcNAc-1-P), which is converted into UDP-GlcNAc by the transfer of uridine 5-monophosphate (from uridine 5-triphosphate), a reaction catalyzed by the N-terminal domain. The sequence is that of Bifunctional protein GlmU from Sulfurimonas denitrificans (strain ATCC 33889 / DSM 1251) (Thiomicrospira denitrificans (strain ATCC 33889 / DSM 1251)).